Consider the following 271-residue polypeptide: Aminoglycoside 3'-phosphotransferase (271 aa).

The Proton acceptor role is filled by Asp-198.

The protein belongs to the aminoglycoside phosphotransferase family.

The catalysed reaction is kanamycin A + ATP = kanamycin 3'-phosphate + ADP + H(+). Resistance to kanamycin and structurally-related aminoglycosides, including amikacin. The polypeptide is Aminoglycoside 3'-phosphotransferase (aphA) (Escherichia coli).